A 110-amino-acid chain; its full sequence is NADH-quinone oxidoreductase subunit K (110 aa).

A run of 3 helical transmembrane segments spans residues 13–33, 41–61, and 73–93; these read LNHY…GLFM, ILMS…AFSI, and IIIL…LLIY.

Belongs to the complex I subunit 4L family. In terms of assembly, NDH-1 is composed of 14 different subunits. Subunits NuoA, H, J, K, L, M, N constitute the membrane sector of the complex.

The protein localises to the cell inner membrane. The enzyme catalyses a quinone + NADH + 5 H(+)(in) = a quinol + NAD(+) + 4 H(+)(out). Its function is as follows. NDH-1 shuttles electrons from NADH, via FMN and iron-sulfur (Fe-S) centers, to quinones in the respiratory chain. The immediate electron acceptor for the enzyme in this species is believed to be ubiquinone. Couples the redox reaction to proton translocation (for every two electrons transferred, four hydrogen ions are translocated across the cytoplasmic membrane), and thus conserves the redox energy in a proton gradient. This Rickettsia conorii (strain ATCC VR-613 / Malish 7) protein is NADH-quinone oxidoreductase subunit K.